The chain runs to 249 residues: Derlin-2.2 (249 aa).

Topologically, residues 1–21 are cytoplasmic; that stretch reads MAQAVEEWYRQMPIITRSYLT. Residues 22-42 form a helical membrane-spanning segment; it reads AAVVTTVGCTLEIISPYHLYL. Over 43–96 the chain is Lumenal; that stretch reads NPKLVVQHYEIWRLVTNFLYFRKMDLDFLFHMFFLARYCKLLEENSFRGRTADF. A helical membrane pass occupies residues 97–117; sequence FYMLLFGATVLTGIVLIGGMI. Residues 118-122 lie on the Cytoplasmic side of the membrane; it reads PYISE. A helical membrane pass occupies residues 123 to 143; it reads TFARILFLSNSLTFMMVYVWS. The Lumenal portion of the chain corresponds to 144-152; sequence KHNPFIHMS. The helical transmembrane segment at 153–173 threads the bilayer; it reads FLGLFTFTAAYLPWVLLGFSI. Residues 174–249 are Cytoplasmic-facing; it reads LVGSSTWVDL…GAIGVDPQAQ (76 aa).

The protein belongs to the derlin family. In terms of tissue distribution, expressed in roots, stalks, leaves, immature ears, embryo and endosperm.

Its subcellular location is the endoplasmic reticulum membrane. In terms of biological role, may be involved in the degradation process of specific misfolded endoplasmic reticulum (ER) luminal proteins. In Zea mays (Maize), this protein is Derlin-2.2 (DER2.2).